Here is a 391-residue protein sequence, read N- to C-terminus: 1-deoxy-D-xylulose 5-phosphate reductoisomerase (391 aa).

Residues threonine 11, glycine 12, serine 13, isoleucine 14, and asparagine 126 each coordinate NADPH. A 1-deoxy-D-xylulose 5-phosphate-binding site is contributed by lysine 127. Glutamate 128 is a binding site for NADPH. A Mn(2+)-binding site is contributed by aspartate 152. The 1-deoxy-D-xylulose 5-phosphate site is built by serine 153, glutamate 154, serine 176, and histidine 199. Glutamate 154 is a Mn(2+) binding site. Glycine 205 is a binding site for NADPH. Positions 212, 217, 218, and 221 each coordinate 1-deoxy-D-xylulose 5-phosphate. Glutamate 221 contributes to the Mn(2+) binding site.

The protein belongs to the DXR family. It depends on Mg(2+) as a cofactor. Requires Mn(2+) as cofactor.

It carries out the reaction 2-C-methyl-D-erythritol 4-phosphate + NADP(+) = 1-deoxy-D-xylulose 5-phosphate + NADPH + H(+). The protein operates within isoprenoid biosynthesis; isopentenyl diphosphate biosynthesis via DXP pathway; isopentenyl diphosphate from 1-deoxy-D-xylulose 5-phosphate: step 1/6. Catalyzes the NADPH-dependent rearrangement and reduction of 1-deoxy-D-xylulose-5-phosphate (DXP) to 2-C-methyl-D-erythritol 4-phosphate (MEP). The polypeptide is 1-deoxy-D-xylulose 5-phosphate reductoisomerase (Acidithiobacillus ferrooxidans (strain ATCC 53993 / BNL-5-31) (Leptospirillum ferrooxidans (ATCC 53993))).